The sequence spans 220 residues: Ribonuclease HII (220 aa).

The RNase H type-2 domain occupies 32-220 (KHIAGIDEAG…FAPIKGRFDC (189 aa)). A divalent metal cation is bound by residues Asp38, Glu39, and Asp130.

This sequence belongs to the RNase HII family. Requires Mn(2+) as cofactor. The cofactor is Mg(2+).

Its subcellular location is the cytoplasm. The catalysed reaction is Endonucleolytic cleavage to 5'-phosphomonoester.. Functionally, endonuclease that specifically degrades the RNA of RNA-DNA hybrids. The chain is Ribonuclease HII from Brucella canis (strain ATCC 23365 / NCTC 10854 / RM-666).